The primary structure comprises 305 residues: Protoheme IX farnesyltransferase (305 aa).

9 helical membrane passes run 29-49 (VTQLAVFCAIIGMFLATPGMV), 51-71 (WSVLIGGAAGIWLLAGAAFAI), 101-121 (TLIFSAVLGGAGMWLLHVFAN), 123-143 (LTMWLTFATFLGYAVVYTILL), 151-171 (IVIGGLSGAMPPALGWSAVSG), 177-197 (AWFLVLIIFTWTPPHFWALAL), 221-241 (LLHILLYTLIMIAATLLPFVY), 244-264 (SGYIYLVAALGLGLVFLGYAW), and 283-303 (ILYLSLLFAVLLVDHYFKFVP).

This sequence belongs to the UbiA prenyltransferase family. Protoheme IX farnesyltransferase subfamily.

It localises to the cell inner membrane. The catalysed reaction is heme b + (2E,6E)-farnesyl diphosphate + H2O = Fe(II)-heme o + diphosphate. It participates in porphyrin-containing compound metabolism; heme O biosynthesis; heme O from protoheme: step 1/1. Its function is as follows. Converts heme B (protoheme IX) to heme O by substitution of the vinyl group on carbon 2 of heme B porphyrin ring with a hydroxyethyl farnesyl side group. The polypeptide is Protoheme IX farnesyltransferase (Cupriavidus metallidurans (strain ATCC 43123 / DSM 2839 / NBRC 102507 / CH34) (Ralstonia metallidurans)).